The primary structure comprises 499 residues: Eukaryotic peptide chain release factor GTP-binding subunit ERF3A (499 aa).

Residues 1–69 (MELSEPIVEN…PKSVVAPPGA (69 aa)) form a disordered region. Positions 41–50 (RPPEESAHEM) are enriched in basic and acidic residues. One can recognise a tr-type G domain in the interval 72–298 (KEHVNVVFIG…DNLPNFNRSV (227 aa)). A G1 region spans residues 81 to 88 (GHVDAGKS). Residue 84 to 89 (DAGKST) participates in GTP binding. The G2 stretch occupies residues 137–141 (GKTVE). Residues 158-161 (DAPG) form a G3 region. Residues 220–223 (NKMD) and 262–264 (SGL) each bind GTP. The interval 220 to 223 (NKMD) is G4. The interval 262–264 (SGL) is G5.

It belongs to the TRAFAC class translation factor GTPase superfamily. Classic translation factor GTPase family. ERF3 subfamily. Component of the eRF1-eRF3-GTP ternary complex, composed of ETF1/ERF1 and ERF3 (GSPT1/ERF3A or GSPT2/ERF3B) and GTP. Component of the transient SURF (SMG1-UPF1-eRF1-eRF3) complex. The ETF1-GSPT1 complex interacts with JMJD4. Interacts with PABPC1. Interacts with SHFL.

The catalysed reaction is GTP + H2O = GDP + phosphate + H(+). GTPase component of the eRF1-eRF3-GTP ternary complex, a ternary complex that mediates translation termination in response to the termination codons UAA, UAG and UGA. GSPT1/ERF3A mediates ETF1/ERF1 delivery to stop codons: The eRF1-eRF3-GTP complex binds to a stop codon in the ribosomal A-site. GTP hydrolysis by GSPT1/ERF3A induces a conformational change that leads to its dissociation, permitting ETF1/ERF1 to accommodate fully in the A-site. Component of the transient SURF complex which recruits UPF1 to stalled ribosomes in the context of nonsense-mediated decay (NMD) of mRNAs containing premature stop codons. Required for SHFL-mediated translation termination which inhibits programmed ribosomal frameshifting (-1PRF) of mRNA from viruses and cellular genes. In Homo sapiens (Human), this protein is Eukaryotic peptide chain release factor GTP-binding subunit ERF3A (GSPT1).